The primary structure comprises 75 residues: Dermaseptin-SP3 (75 aa).

An N-terminal signal peptide occupies residues 1-22; the sequence is MAFLKKSLFLVLFLGLVSLSMC. The propeptide occupies 23-45; it reads EEEKRENEVEEEQEDDEQSELRR. A Proline amide modification is found at Pro-72. A propeptide spanning residues 74-75 is cleaved from the precursor; sequence EQ.

The protein belongs to the frog skin active peptide (FSAP) family. Dermaseptin subfamily. As to expression, expressed by the skin glands.

It localises to the secreted. The protein localises to the target cell membrane. Antimicrobial peptide with activity against Gram-positive and Gram-negative bacteria and fungi. Has been tested against E.coli (MIC=47.50-128 uM), S.aureus (MIC=189.98-512 uM), K.pneumoniae (MIC&gt;189.98 uM) and C.albicans (MIC&gt;189.98 uM). Probably acts by disturbing membrane functions with its alpha-helical amphipathic structure. May penetrate bacterial membranes, but stay at the mammalian membrane surface. Shows a very weak hemolytic activity. This Agalychnis spurrelli (Gliding leaf frog) protein is Dermaseptin-SP3.